Consider the following 398-residue polypeptide: 1-deoxy-D-xylulose 5-phosphate reductoisomerase (398 aa).

NADPH-binding residues include Thr-10, Gly-11, Ser-12, Ile-13, Gly-36, Arg-37, Asn-38, and Asn-124. Position 125 (Lys-125) interacts with 1-deoxy-D-xylulose 5-phosphate. Glu-126 contacts NADPH. Position 150 (Asp-150) interacts with Mn(2+). Positions 151, 152, 186, and 209 each coordinate 1-deoxy-D-xylulose 5-phosphate. Glu-152 serves as a coordination point for Mn(2+). Gly-215 lines the NADPH pocket. Ser-222, Asn-227, Lys-228, and Glu-231 together coordinate 1-deoxy-D-xylulose 5-phosphate. Glu-231 provides a ligand contact to Mn(2+).

The protein belongs to the DXR family. As to quaternary structure, homodimer. It depends on Mg(2+) as a cofactor. Mn(2+) is required as a cofactor.

The enzyme catalyses 2-C-methyl-D-erythritol 4-phosphate + NADP(+) = 1-deoxy-D-xylulose 5-phosphate + NADPH + H(+). Its pathway is isoprenoid biosynthesis; isopentenyl diphosphate biosynthesis via DXP pathway; isopentenyl diphosphate from 1-deoxy-D-xylulose 5-phosphate: step 1/6. Its function is as follows. Catalyzes the NADPH-dependent rearrangement and reduction of 1-deoxy-D-xylulose-5-phosphate (DXP) to 2-C-methyl-D-erythritol 4-phosphate (MEP). The protein is 1-deoxy-D-xylulose 5-phosphate reductoisomerase of Yersinia pseudotuberculosis serotype O:1b (strain IP 31758).